The chain runs to 215 residues: UPF0319 protein VVA1446 (215 aa).

An N-terminal signal peptide occupies residues M1–A21.

Belongs to the UPF0319 family.

This is UPF0319 protein VVA1446 from Vibrio vulnificus (strain YJ016).